The following is a 152-amino-acid chain: UPF0266 membrane protein ESA_01432 (152 aa).

3 helical membrane-spanning segments follow: residues 1–21 (MTLT…WAIY), 45–65 (ADSL…VASH), and 67–87 (ALLT…LFWI).

This sequence belongs to the UPF0266 family.

Its subcellular location is the cell inner membrane. The sequence is that of UPF0266 membrane protein ESA_01432 from Cronobacter sakazakii (strain ATCC BAA-894) (Enterobacter sakazakii).